The sequence spans 191 residues: Cell division protein SepF (191 aa).

Positions 153 to 178 (FPEEASPSNVSSKKTSQYKFETNTTP) are enriched in polar residues. The segment at 153–191 (FPEEASPSNVSSKKTSQYKFETNTTPEPAWGESKLSAYN) is disordered.

This sequence belongs to the SepF family. In terms of assembly, homodimer. Interacts with FtsZ.

The protein resides in the cytoplasm. In terms of biological role, cell division protein that is part of the divisome complex and is recruited early to the Z-ring. Probably stimulates Z-ring formation, perhaps through the cross-linking of FtsZ protofilaments. Its function overlaps with FtsA. The sequence is that of Cell division protein SepF from Prochlorococcus marinus subsp. pastoris (strain CCMP1986 / NIES-2087 / MED4).